Consider the following 503-residue polypeptide: Aromatase (503 aa).

Cys437 is a heme binding site.

The protein belongs to the cytochrome P450 family. The cofactor is heme.

It is found in the membrane. It carries out the reaction testosterone + 3 reduced [NADPH--hemoprotein reductase] + 3 O2 = 17beta-estradiol + formate + 3 oxidized [NADPH--hemoprotein reductase] + 4 H2O + 4 H(+). It catalyses the reaction androst-4-ene-3,17-dione + 3 reduced [NADPH--hemoprotein reductase] + 3 O2 = estrone + formate + 3 oxidized [NADPH--hemoprotein reductase] + 4 H2O + 4 H(+). Catalyzes the formation of aromatic C18 estrogens from C19 androgens. The protein is Aromatase (CYP19A1) of Oryctolagus cuniculus (Rabbit).